A 306-amino-acid chain; its full sequence is Protein YIPF1 (306 aa).

At 1–119 (MAAVDDLQFE…VRLYIRSNPD (119 aa)) the chain is on the cytoplasmic side. A disordered region spans residues 14–62 (NAATSLTANPDATTVNIEDPGETPKHQPGSPRGSGREEDDELLGNDDSD). The span at 15-29 (AATSLTANPDATTVN) shows a compositional bias: polar residues. The segment covering 50–59 (EEDDELLGND) has biased composition (acidic residues). A helical transmembrane segment spans residues 120-140 (LYGPFWICATLVFAIAISGNL). Over 141-162 (SNFLIHLGEKTYHYVPEFRKVS) the chain is Lumenal. A helical membrane pass occupies residues 163–183 (IAATIIYAYAWLVPLALWGFL). Residues 184 to 200 (MWRNSKVMNIVSYSFLE) are Cytoplasmic-facing. A helical membrane pass occupies residues 201–221 (IVCVYGYSLFIYIPTAILWII). Residues 222–227 (PQKAVR) lie on the Lumenal side of the membrane. A helical membrane pass occupies residues 228-248 (WILVMIALGISGSLLAMTFWP). Over 249-256 (AVREDNRR) the chain is Cytoplasmic. A helical membrane pass occupies residues 257-277 (VALATIVTIVLLHMLLSVGCL). Topologically, residues 278-306 (AYFFDAPEMDHLPTTTATPNQTVAAAKSS) are lumenal. Residue Asn297 is glycosylated (N-linked (GlcNAc...) asparagine).

The protein belongs to the YIP1 family. As to quaternary structure, interacts with YIPF6; this interaction may stabilize YIPF1. May also form a ternary complex with YIPF2 and YIPF6.

Its subcellular location is the golgi apparatus. It localises to the cis-Golgi network membrane. The protein localises to the trans-Golgi network membrane. The protein resides in the late endosome membrane. This Homo sapiens (Human) protein is Protein YIPF1 (YIPF1).